The primary structure comprises 197 residues: Pyridoxal 5'-phosphate synthase subunit PdxT (197 aa).

52 to 54 (GES) serves as a coordination point for L-glutamine. Cys83 functions as the Nucleophile in the catalytic mechanism. Residues Arg115 and 142–143 (IR) each bind L-glutamine. Catalysis depends on charge relay system residues His178 and Glu180.

The protein belongs to the glutaminase PdxT/SNO family. In the presence of PdxS, forms a dodecamer of heterodimers. Only shows activity in the heterodimer.

The catalysed reaction is aldehydo-D-ribose 5-phosphate + D-glyceraldehyde 3-phosphate + L-glutamine = pyridoxal 5'-phosphate + L-glutamate + phosphate + 3 H2O + H(+). It carries out the reaction L-glutamine + H2O = L-glutamate + NH4(+). It participates in cofactor biosynthesis; pyridoxal 5'-phosphate biosynthesis. In terms of biological role, catalyzes the hydrolysis of glutamine to glutamate and ammonia as part of the biosynthesis of pyridoxal 5'-phosphate. The resulting ammonia molecule is channeled to the active site of PdxS. This is Pyridoxal 5'-phosphate synthase subunit PdxT from Korarchaeum cryptofilum (strain OPF8).